The following is a 721-amino-acid chain: Dolichyl-diphosphooligosaccharide--protein glycosyltransferase subunit STT3B (721 aa).

At 1-25 (MAAATALDSLPAPLRSLRLKTKQQE) the chain is on the cytoplasmic side. The chain crosses the membrane as a helical span at residues 26-46 (LLLRVSALALIYVLAFVVRLF). Over 47 to 129 (SVLRYESMIH…VHIREVCVLT (83 aa)) the chain is Lumenal. Positions 57 to 59 (EFD) match the DXD motif 1 motif. D59 contributes to the Mn(2+) binding site. The chain crosses the membrane as a helical span at residues 130–148 (APFFAANTTLVAYAFGREI). The Cytoplasmic portion of the chain corresponds to 149 to 150 (WD). A helical transmembrane segment spans residues 151–168 (SGAGLVAAALIAVCPGYI). The Lumenal segment spans residues 169-179 (SRSVAGSYDNE). D177 and E179 together coordinate Mn(2+). The short motif at 177–179 (DNE) is the DXD motif 2 element. Residues 180-199 (GVAIFALLLTFYLFVRAVNT) traverse the membrane as a helical segment. Residues 200 to 201 (GS) lie on the Cytoplasmic side of the membrane. Residues 202 to 216 (LAWSLASAFGYFYMV) form a helical membrane-spanning segment. Residues 217-221 (SAWGG) are Lumenal-facing. Residues 222–238 (YVFIINLLPLYVLVLLV) traverse the membrane as a helical segment. The Cytoplasmic portion of the chain corresponds to 239-243 (TGRYS). The helical transmembrane segment at 244–269 (QRLYVAYNSTYVLGMLLAMQIRFVGF) threads the bilayer. Over 270-277 (QHVQSGEH) the chain is Lumenal. Residues 278–297 (MAAMGVFFLLQVFFFLDWVK) form a helical membrane-spanning segment. The Cytoplasmic portion of the chain corresponds to 298–313 (YLLNDAKLFKSFLRIT). A helical transmembrane segment spans residues 314–334 (LTCVITVGTLALGIGTASGYI). The Lumenal segment spans residues 335–367 (SPWTGRFYSLLDPTYAKDHIPIIASVSEHQPTA). An SVSE motif motif is present at residues 359–362 (SVSE). A helical transmembrane segment spans residues 368–390 (WSSFMFDFHILLFLFPAGLYFCF). The Cytoplasmic segment spans residues 391–396 (KRLSDA). A helical membrane pass occupies residues 397-413 (TIFIVMYGLTSMYFAGV). The Lumenal portion of the chain corresponds to 414-417 (MVRL). Position 416 (R416) interacts with dolichyl diphosphooligosaccharide. A helical transmembrane segment spans residues 418 to 439 (ILVAAPAVCLISAIAASATIKN). Topologically, residues 440–471 (LTTLIRTKSKSPQTVSGKSSGSKAAAKGAVDQ) are cytoplasmic. Residues 472-492 (SLPFQQNVAIALLLGAFYLLS) traverse the membrane as a helical segment. At 493-721 (RYAVHCTWVT…YKVKPPKNRS (229 aa)) the chain is on the lumenal side. Residues 548–550 (WWD) form an interacts with target acceptor peptide in protein substrate region. Residues 548–552 (WWDYG) carry the WWDYG motif motif. Residue Y553 coordinates dolichyl diphosphooligosaccharide. N-linked (GlcNAc...) asparagine glycosylation is found at N560 and N567. N571 is a glycosylation site (N-linked (GlcNAc...) (high mannose) asparagine). The short motif at 615 to 622 (DINKFLWM) is the DK motif element.

Belongs to the STT3 family. In terms of assembly, component of the oligosaccharyltransferase (OST) complex. Requires Mg(2+) as cofactor. It depends on Mn(2+) as a cofactor.

The protein localises to the endoplasmic reticulum membrane. It catalyses the reaction a di-trans,poly-cis-dolichyl diphosphooligosaccharide + L-asparaginyl-[protein] = N(4)-(oligosaccharide-(1-&gt;4)-N-acetyl-beta-D-glucosaminyl-(1-&gt;4)-N-acetyl-beta-D-glucosaminyl)-L-asparaginyl-[protein] + a di-trans,poly-cis-dolichyl diphosphate + H(+). It functions in the pathway protein modification; protein glycosylation. Catalytic subunit of the oligosaccharyl transferase (OST) complex that catalyzes the initial transfer of a defined glycan (Glc(3)Man(9)GlcNAc(2) in eukaryotes) from the lipid carrier dolichol-pyrophosphate to an asparagine residue within an Asn-X-Ser/Thr consensus motif in nascent polypeptide chains, the first step in protein N-glycosylation. N-glycosylation occurs cotranslationally and the complex associates with the Sec61 complex at the channel-forming translocon complex that mediates protein translocation across the endoplasmic reticulum (ER). All subunits are required for a maximal enzyme activity. This subunit contains the active site and the acceptor peptide and donor lipid-linked oligosaccharide (LLO) binding pockets. The chain is Dolichyl-diphosphooligosaccharide--protein glycosyltransferase subunit STT3B (STT3B) from Oryza sativa subsp. japonica (Rice).